Here is a 328-residue protein sequence, read N- to C-terminus: Type II secretion system protein K (328 aa).

The propeptide at 1–7 is leader sequence; that stretch reads MRSRQRG. A helical membrane pass occupies residues 8–28; sequence AALLVVLLILALMVTIAAVIT. Residues 29–328 are Periplasmic-facing; the sequence is ERTGKAFLRT…QYGGYRTVNP (300 aa).

The protein belongs to the GSP K family. In terms of assembly, type II secretion is composed of four main components: the outer membrane complex, the inner membrane complex, the cytoplasmic secretion ATPase and the periplasm-spanning pseudopilus. Interacts with core component OutG. Post-translationally, cleaved by prepilin peptidase.

It is found in the cell inner membrane. Functionally, component of the type II secretion system required for the energy-dependent secretion of extracellular factors such as proteases and toxins from the periplasm. Plays a role in pseudopilus assembly and seems to control its length. Interacts with the pseudopilus tip complex that is critical for the recognition and binding of secretion substrates. The chain is Type II secretion system protein K (outK) from Pectobacterium carotovorum subsp. carotovorum (Erwinia carotovora subsp. carotovora).